The primary structure comprises 1123 residues: Leucine--tRNA ligase, cytoplasmic (1123 aa).

Positions 84–94 (PYMNGRLHAGH) match the 'HIGH' region motif. The 'KMSKS' region motif lies at 757-761 (KMSKS). Lys-760 provides a ligand contact to ATP.

The protein belongs to the class-I aminoacyl-tRNA synthetase family.

It localises to the cytoplasm. The enzyme catalyses tRNA(Leu) + L-leucine + ATP = L-leucyl-tRNA(Leu) + AMP + diphosphate. The sequence is that of Leucine--tRNA ligase, cytoplasmic (leu-6) from Neurospora crassa (strain ATCC 24698 / 74-OR23-1A / CBS 708.71 / DSM 1257 / FGSC 987).